Here is a 398-residue protein sequence, read N- to C-terminus: Serine/threonine-protein kinase 32A (398 aa).

A lipid anchor (N-myristoyl glycine) is attached at glycine 2. The Protein kinase domain maps to 23-281; it reads FEILRAIGKG…LTDIQNFPYM (259 aa). ATP is bound by residues 29-37 and lysine 52; that span reads IGKGSFGKV. Aspartate 146 serves as the catalytic Proton acceptor. Residues 379–398 are disordered; it reads ALEQTKNNTEEEEDGQNNNL. Residues 388–398 show a composition bias toward acidic residues; the sequence is EEEEDGQNNNL.

Belongs to the protein kinase superfamily. Ser/Thr protein kinase family. Mg(2+) serves as cofactor.

It is found in the cell membrane. It carries out the reaction L-seryl-[protein] + ATP = O-phospho-L-seryl-[protein] + ADP + H(+). The enzyme catalyses L-threonyl-[protein] + ATP = O-phospho-L-threonyl-[protein] + ADP + H(+). This Mus musculus (Mouse) protein is Serine/threonine-protein kinase 32A.